Consider the following 309-residue polypeptide: Prephenate dehydratase (309 aa).

Positions 3-191 (GIAYLGPEGT…ARTRFVLVGC (189 aa)) constitute a Prephenate dehydratase domain. The 78-residue stretch at 205-282 (SVVLRLDNVP…ADVRYLGSWP (78 aa)) folds into the ACT domain.

In terms of assembly, homodimer.

The catalysed reaction is prephenate + H(+) = 3-phenylpyruvate + CO2 + H2O. It functions in the pathway amino-acid biosynthesis; L-phenylalanine biosynthesis; phenylpyruvate from prephenate: step 1/1. In Mycolicibacterium gilvum (strain PYR-GCK) (Mycobacterium gilvum (strain PYR-GCK)), this protein is Prephenate dehydratase (pheA).